Reading from the N-terminus, the 501-residue chain is Glycerol kinase (501 aa).

Residue threonine 12 coordinates ADP. 3 residues coordinate ATP: threonine 12, threonine 13, and serine 14. Threonine 12 provides a ligand contact to sn-glycerol 3-phosphate. ADP is bound at residue arginine 16. Residues arginine 82, glutamate 83, tyrosine 134, and aspartate 244 each coordinate sn-glycerol 3-phosphate. Glycerol is bound by residues arginine 82, glutamate 83, tyrosine 134, aspartate 244, and glutamine 245. ADP-binding residues include threonine 266 and glycine 310. Threonine 266, glycine 310, glutamine 314, and glycine 411 together coordinate ATP. ADP contacts are provided by glycine 411 and asparagine 415.

Belongs to the FGGY kinase family.

The catalysed reaction is glycerol + ATP = sn-glycerol 3-phosphate + ADP + H(+). The protein operates within polyol metabolism; glycerol degradation via glycerol kinase pathway; sn-glycerol 3-phosphate from glycerol: step 1/1. Inhibited by fructose 1,6-bisphosphate (FBP). Its function is as follows. Key enzyme in the regulation of glycerol uptake and metabolism. Catalyzes the phosphorylation of glycerol to yield sn-glycerol 3-phosphate. This is Glycerol kinase from Methylorubrum extorquens (strain PA1) (Methylobacterium extorquens).